The primary structure comprises 210 residues: Holliday junction resolvase RecU (210 aa).

The Mg(2+) site is built by T93, D95, E108, and Q127.

The protein belongs to the RecU family. The cofactor is Mg(2+).

The protein localises to the cytoplasm. The catalysed reaction is Endonucleolytic cleavage at a junction such as a reciprocal single-stranded crossover between two homologous DNA duplexes (Holliday junction).. Functionally, endonuclease that resolves Holliday junction intermediates in genetic recombination. Cleaves mobile four-strand junctions by introducing symmetrical nicks in paired strands. Promotes annealing of linear ssDNA with homologous dsDNA. Required for DNA repair, homologous recombination and chromosome segregation. In Lactobacillus helveticus (strain DPC 4571), this protein is Holliday junction resolvase RecU.